We begin with the raw amino-acid sequence, 562 residues long: Proton channel OTOP2 (562 aa).

The interval 1–20 (MSEELAQGPKESPPAPRAGP) is disordered. The next 12 membrane-spanning stretches (helical) occupy residues 30–50 (LLSV…ISGG), 62–82 (VFAL…FYLL), 100–120 (PIWL…MDVF), 137–157 (ILHP…LWVS), 169–189 (TWCG…AAVV), 241–261 (FYLY…LYVM), 289–309 (FFAG…VFII), 324–344 (ALVI…LVSL), 371–391 (LLMG…VAVV), 402–422 (LNLT…MFII), 495–515 (DISL…AFGA), and 527–547 (FYGY…GIFY).

Belongs to the otopetrin family.

The protein localises to the cell membrane. The enzyme catalyses H(+)(in) = H(+)(out). Its activity is regulated as follows. Actives at neutral and alkaline extracellular pH, acid extracellular pH appears to inhibit the channel. Insensitive to activation by Zn(2+). Its function is as follows. Proton-selective ion channel open at neutral pH. Actives at neutral and alkaline extracellular pH, likely participates in some alkali-related physiological activities. This chain is Proton channel OTOP2, found in Homo sapiens (Human).